The primary structure comprises 200 residues: dTDP-4-dehydrorhamnose 3,5-epimerase (200 aa).

Residues Arg21, Glu26, 45–47 (QVN), and Arg57 contribute to the substrate site. His60 serves as the catalytic Proton acceptor. Substrate contacts are provided by Lys70 and His116. Tyr129 (proton donor) is an active-site residue. The substrate site is built by Glu140 and Lys165.

The protein belongs to the dTDP-4-dehydrorhamnose 3,5-epimerase family.

The enzyme catalyses dTDP-4-dehydro-6-deoxy-alpha-D-glucose = dTDP-4-dehydro-beta-L-rhamnose. It functions in the pathway carbohydrate biosynthesis; dTDP-L-rhamnose biosynthesis. The protein operates within antibiotic biosynthesis; streptomycin biosynthesis. In terms of biological role, involved in the biosynthesis of the dihydrostreptose moiety of streptomycin. Catalyzes the epimerization of the C3' and C5'positions of dTDP-6-deoxy-D-xylo-4-hexulose, forming dTDP-6-deoxy-L-lyxo-4-hexulose. This Streptomyces griseus protein is dTDP-4-dehydrorhamnose 3,5-epimerase.